The sequence spans 1378 residues: MPSVVQSNFRVRKNLGRVRRIIDVPNLIDIQKSSYDKFLQMSVPPNEREEVGLQAVFRSVFPIKDFNGTSELVFVSYNLEPPKYDVDECRQRGMTYSAPIKVTNQLMIYDTRDGGERIVRDIKEQEVYFGELPLMTETGTFIINGTERVVVSQLHRSPGVFFDHDKGKTHSSGKLLYSARVIPYRGSWLDFEFDPKDIIYVRIDRRRKMHATVLLRALGYSTQDLLNYFYSTETVYLEKGGKYAKSIEYDLLAGQRTTRDIKIGNDVIVKKNTKFTRAAIRKMKEAKLERLSLEPEELVGKVAAHDIVDPETGEVVVEVNEELTEAKLERLRDANIEQFRILFIDGLNVGSYLRDTLLTDKVKTMEDSILEIYRRLRPGDPPTLETAKTLFHNLFFNAERYDLSKVGRLKLNYKFYRDVPEDERPGLDLTVLTPQDILETVRHLIELKNGRGSVDDIDHLGNRRVRAVGELMENQYRIGLVRMERAIKERMSMSQEIDTLMPHDLINAKPVSAVVKEYFGSSQLSQFMDQTNPLSEVTHKRRLSALGPGGLTRERAGFEVRDVHATHYGRICPIETPEGPNIGLIASLSTFARVNEFGFVETPYRKVENGRVTEDVIWLSALEEEGKYIAQATVNLDEGGRFKESLVSARYNGEFKIVTPEMVELMDVAPNQMVSVAAALVPFLEHDDANRALMGANMQRQAVPLVQSHAPLVGTGMEERLARDSGVCVIARRPGVVESVDATRIVVRAEGEGAEVPDIYHLMKFQRSNQSTCYTQKPVVRTGEVVKKGDVLADGPSTDMGELALGQNVLVAFMPWQGYNFEDSILVSERIAKDDVFTSIHIEEFECVARDTKLGKEEITRDIPNVGEEALKDLDDSGIVRIGAEVRPGDILVGKITPKGETQLSPEEKLLRAIFGEKAGDVRDSSLKVPPGVGGIVINARVFSRKGTEKDDRARDIEDQERARIERTRDEEIKILRDSFFRRIRELLLGKEATGKLVDDKGKVLFQKGAIIDEPSLAEIPRKYWGEIPVDDAERVQQILRDLEELVRTREEHFRDKIDRLSKGDELPPGVIKMVKVYIAIKRKLQVGDKMAGRHGNKGVISRILPEEDMPYLQDGRPVDLVLNPLGVPSRMNVGQILEIHLGWGAFELGNQLQRMIEQQRASAEIKEHLKAIYAGDETMNGFFDNLDDGDVKRFVKTVDEGVFMGSPVFDGAHESDIKGALDLAGLPTSGQAILFDGRTGDAFDQNVTVGIMYMLKLHHLVDDKIHARSIGPYSLVTQQPLGGKAQFGGQRLGEMEVWAMEAYGAAYALQEFLTVKSDDVMGRTRMYEAIVKGDYTLEAGLPESFNVLIKELQSLCLNVELVETSAGVEASAAEEEE.

This sequence belongs to the RNA polymerase beta chain family. The RNAP catalytic core consists of 2 alpha, 1 beta, 1 beta' and 1 omega subunit. When a sigma factor is associated with the core the holoenzyme is formed, which can initiate transcription.

The enzyme catalyses RNA(n) + a ribonucleoside 5'-triphosphate = RNA(n+1) + diphosphate. In terms of biological role, DNA-dependent RNA polymerase catalyzes the transcription of DNA into RNA using the four ribonucleoside triphosphates as substrates. In Sorangium cellulosum (strain So ce56) (Polyangium cellulosum (strain So ce56)), this protein is DNA-directed RNA polymerase subunit beta.